The sequence spans 414 residues: MAITAIKGCNDILPEESGRWQYIEQAARRIFERNGFSEIRVPIMEKTELFCRSIGDTSDIVEKEMYTFTDKGENSVTLRPEGTAGVMRAYIEHKMHAQDPLAKLYYLGPMFRYERPQKGRYRQFHQIGAEVTGVTDPLVDAQVLNMLCAFFHEIGLDEPTLQINSLGCPDCRPAYRAALMEFLQGRLDRLCDDCKRRFTVNPLRTLDCKSAGCAEATKGAPAMLDHLCTACDDHFSSVKRYLDLTGSRYSINPRMVRGLDYYTRTTFELVTGLLGAQSAVAAGGRYDGLISQLGGPSIPGIGFAMGVERVALLLGERDFSRRPDLFIATMGAGQRDKAFCLLTKLQNQGIRVEMDYEGKSLKSQMRRADKLRARFSVVIGENELATGRASFKRMEDGVQNEAALEADDIVTLLA.

It belongs to the class-II aminoacyl-tRNA synthetase family. In terms of assembly, homodimer.

It is found in the cytoplasm. It carries out the reaction tRNA(His) + L-histidine + ATP = L-histidyl-tRNA(His) + AMP + diphosphate + H(+). The protein is Histidine--tRNA ligase of Pelobacter propionicus (strain DSM 2379 / NBRC 103807 / OttBd1).